The chain runs to 818 residues: Glycerol-3-phosphate acyltransferase (818 aa).

An HXXXXD motif motif is present at residues 305 to 310 (HRSHMD).

The protein belongs to the GPAT/DAPAT family.

Its subcellular location is the cell inner membrane. It catalyses the reaction sn-glycerol 3-phosphate + an acyl-CoA = a 1-acyl-sn-glycero-3-phosphate + CoA. It participates in phospholipid metabolism; CDP-diacylglycerol biosynthesis; CDP-diacylglycerol from sn-glycerol 3-phosphate: step 1/3. This is Glycerol-3-phosphate acyltransferase from Photorhabdus laumondii subsp. laumondii (strain DSM 15139 / CIP 105565 / TT01) (Photorhabdus luminescens subsp. laumondii).